Reading from the N-terminus, the 334-residue chain is Lipoyl synthase (334 aa).

Cys-71, Cys-76, Cys-82, Cys-97, Cys-101, Cys-104, and Ser-312 together coordinate [4Fe-4S] cluster. The region spanning 83 to 301 (WSHGTATFMV…RQEGLRRGFR (219 aa)) is the Radical SAM core domain.

It belongs to the radical SAM superfamily. Lipoyl synthase family. It depends on [4Fe-4S] cluster as a cofactor.

The protein localises to the cytoplasm. It catalyses the reaction [[Fe-S] cluster scaffold protein carrying a second [4Fe-4S](2+) cluster] + N(6)-octanoyl-L-lysyl-[protein] + 2 oxidized [2Fe-2S]-[ferredoxin] + 2 S-adenosyl-L-methionine + 4 H(+) = [[Fe-S] cluster scaffold protein] + N(6)-[(R)-dihydrolipoyl]-L-lysyl-[protein] + 4 Fe(3+) + 2 hydrogen sulfide + 2 5'-deoxyadenosine + 2 L-methionine + 2 reduced [2Fe-2S]-[ferredoxin]. Its pathway is protein modification; protein lipoylation via endogenous pathway; protein N(6)-(lipoyl)lysine from octanoyl-[acyl-carrier-protein]: step 2/2. In terms of biological role, catalyzes the radical-mediated insertion of two sulfur atoms into the C-6 and C-8 positions of the octanoyl moiety bound to the lipoyl domains of lipoate-dependent enzymes, thereby converting the octanoylated domains into lipoylated derivatives. In Halorhodospira halophila (strain DSM 244 / SL1) (Ectothiorhodospira halophila (strain DSM 244 / SL1)), this protein is Lipoyl synthase.